An 808-amino-acid chain; its full sequence is Disks large-associated protein 5 (808 aa).

Phosphoserine occurs at positions 66 and 70. A coiled-coil region spans residues 88-119; it reads QRKQLLQKYKEEKQLQKLKEQREKAKRGVFKV. The tract at residues 134 to 282 is disordered; it reads QRGAKAEPEK…QTRETSEMGP (149 aa). Basic and acidic residues-rich tracts occupy residues 135–145 and 180–193; these read RGAKAEPEKAF and QTSE…ERKV. Phosphoserine is present on S201. Composition is skewed to basic and acidic residues over residues 232 to 241 and 249 to 278; these read TNEKGSERMR and KKPE…RETS. A Phosphoserine modification is found at S328. 2 positions are modified to phosphothreonine: T337 and T386. Residues 377–413 are disordered; sequence HVLNQKGASTSDSNHASVKGVPCSEGSEGQTSQPPHD. The span at 382 to 392 shows a compositional bias: polar residues; it reads KGASTSDSNHA. S598 bears the Phosphoserine mark. Position 607 is a phosphoserine; by AURKA (S607). Position 612 is a phosphoserine (S612). T617 is subject to Phosphothreonine. At S620 the chain carries Phosphoserine. Residues 629-654 are disordered; it reads RAAGDLLRQKMPLKKPDPQSSKSEHV. Residues 642-654 are compositionally biased toward basic and acidic residues; the sequence is KKPDPQSSKSEHV. Position 728 is a phosphothreonine (T728). Positions 735–757 are disordered; that stretch reads SNPETNTSSQSNTSQEEAEASQS. S743 carries the phosphoserine modification. S797 carries the phosphoserine; by AURKA modification. S806 carries the post-translational modification Phosphoserine.

Belongs to the SAPAP family. Interacts with CDC2. Interacts with the C-terminal proline-rich region of FBXO7. Recruited by FBXO7 to a SCF (SKP1-CUL1-F-box) protein complex in a CDC2/Cyclin B-phosphorylation dependent manner. Interacts with CDH1. In terms of processing, ubiquitinated, leading to its degradation. Decreased phosphorylation levels are associated with the differentiation of intestinal epithelial cells. As to expression, expressed at low levels in normal resting liver. Up-regulated in regenerating liver after partial hepatectomy.

The protein localises to the nucleus. It localises to the cytoplasm. It is found in the cytoskeleton. The protein resides in the spindle. Functionally, potential cell cycle regulator that may play a role in carcinogenesis of cancer cells. Mitotic phosphoprotein regulated by the ubiquitin-proteasome pathway. Key regulator of adherens junction integrity and differentiation that may be involved in CDH1-mediated adhesion and signaling in epithelial cells. The chain is Disks large-associated protein 5 (Dlgap5) from Mus musculus (Mouse).